We begin with the raw amino-acid sequence, 544 residues long: Methionine--tRNA ligase 2 (544 aa).

Residues 10–20 (PYANGSLHLGH) carry the 'HIGH' region motif. Cys141, Cys144, Cys153, and Cys156 together coordinate Zn(2+). A 'KMSKS' region motif is present at residues 329–333 (KLSTS). Position 332 (Thr332) interacts with ATP.

Belongs to the class-I aminoacyl-tRNA synthetase family. MetG type 1 subfamily. In terms of assembly, monomer. It depends on Zn(2+) as a cofactor.

Its subcellular location is the cytoplasm. The enzyme catalyses tRNA(Met) + L-methionine + ATP = L-methionyl-tRNA(Met) + AMP + diphosphate. In terms of biological role, is required not only for elongation of protein synthesis but also for the initiation of all mRNA translation through initiator tRNA(fMet) aminoacylation. This chain is Methionine--tRNA ligase 2, found in Bacillus anthracis.